A 503-amino-acid chain; its full sequence is uncharacterized protein (503 aa).

The stretch at 437-465 (LNKDLILENLIETENENDKQEFQKLLRTI) forms a coiled coil.

The protein belongs to the IIV-6 467R family.

This is an uncharacterized protein from Invertebrate iridescent virus 6 (IIV-6).